The chain runs to 562 residues: Serine/threonine-protein kinase STN7, chloroplastic (562 aa).

The transit peptide at 1–45 (MATISPGGAYIGTPSPFLGKKLKPFSLTSPILSFKPTVKLNSSCR) directs the protein to the chloroplast. The region spanning 134–452 (FVVGKKLGEG…AKAALAHPYF (319 aa)) is the Protein kinase domain. Residues 140–148 (LGEGSFGVV) and K167 each bind ATP. D279 acts as the Proton acceptor in catalysis. Position 526 is a phosphoserine (S526). Residues T537 and T541 each carry the phosphothreonine modification.

Belongs to the protein kinase superfamily. Ser/Thr protein kinase family. Post-translationally, phosphorylated.

The protein resides in the plastid. Its subcellular location is the chloroplast thylakoid membrane. It carries out the reaction L-seryl-[protein] + ATP = O-phospho-L-seryl-[protein] + ADP + H(+). The enzyme catalyses L-threonyl-[protein] + ATP = O-phospho-L-threonyl-[protein] + ADP + H(+). Serine/threonine protein kinase required for state transition by phosphorylating light-harvesting complex II outer antennae (LCHII). State transition plays a central role in response to environmental changes and allows to adjust to changing light conditions via the redistribution of light excitation energy between photosystem II (PSII) and photosystem I (PSI). Phosphorylates the minor light harvesting protein LHCB4.2/CP29 and is involved in the light-dependent phosphorylation of TSP9. Acts as a key component of the long-term response (LTR) signaling pathway. Mediates phosphorylation-dependent PTAC16 subcellular localization to regulate plastid gene expression. The sequence is that of Serine/threonine-protein kinase STN7, chloroplastic (STN7) from Arabidopsis thaliana (Mouse-ear cress).